The primary structure comprises 89 residues: Ixosin-B (89 aa).

Positions 1 to 26 are cleaved as a signal peptide; the sequence is MASGWTHRLLLLAAVVTLGATPIAAA. A propeptide spanning residues 27 to 57 is cleaved from the precursor; the sequence is SMEYLVTAPGYLTPNADIKITAVVTNPSSAG. The interval 68–89 is disordered; it reads SGIQPEQHSSGKSDVRRWRSRY. Residues 76–89 show a composition bias toward basic and acidic residues; the sequence is SSGKSDVRRWRSRY.

In terms of biological role, has antifungal activity against C.albicans. Has antibacterial activity against the Gram-positive bacterium S.aureus and the Gram-negative bacterium E.coli. Lacks hemolytic activity against rabbit erythrocytes. This is Ixosin-B from Ixodes sinensis (Hard tick).